Reading from the N-terminus, the 396-residue chain is Methionine import ATP-binding protein MetN 2 (396 aa).

The region spanning 41–280 (VSFELVGKVF…PRHGATRALL (240 aa)) is the ABC transporter domain. 77–84 (GRSGAGKS) serves as a coordination point for ATP.

This sequence belongs to the ABC transporter superfamily. Methionine importer (TC 3.A.1.24) family. The complex is composed of two ATP-binding proteins (MetN), two transmembrane proteins (MetI) and a solute-binding protein (MetQ).

The protein localises to the cell inner membrane. The catalysed reaction is L-methionine(out) + ATP + H2O = L-methionine(in) + ADP + phosphate + H(+). The enzyme catalyses D-methionine(out) + ATP + H2O = D-methionine(in) + ADP + phosphate + H(+). Its function is as follows. Part of the ABC transporter complex MetNIQ involved in methionine import. Responsible for energy coupling to the transport system. The protein is Methionine import ATP-binding protein MetN 2 of Burkholderia pseudomallei (strain K96243).